We begin with the raw amino-acid sequence, 286 residues long: MANMKDVKRRIKSVESTMQITKAMQLVASSKMRKAKERAEAVHPFFEGVFQVMADISRDHEFTSVFTKKKFKNSVLLIVIAGDRGLAGGFNTNVLKLAKAKADAITESGGEAVIMAIGKKAVEYFEKREYKLIDGFPQIAEGIELIDAMMIANKVIERFKIGDFDAVELVYTTFVSVMTQEPQHLRILPVENLEYLGQKHPMTIYDPSPEEVFDSLIPEYMGGMLYSAIVDSFASEQAARRTAMESASDNANEMIEKLSLLYNRARQAQITQEITEISSASLNDNS.

It belongs to the ATPase gamma chain family. F-type ATPases have 2 components, CF(1) - the catalytic core - and CF(0) - the membrane proton channel. CF(1) has five subunits: alpha(3), beta(3), gamma(1), delta(1), epsilon(1). CF(0) has three main subunits: a, b and c.

It is found in the cell membrane. Produces ATP from ADP in the presence of a proton gradient across the membrane. The gamma chain is believed to be important in regulating ATPase activity and the flow of protons through the CF(0) complex. This Ruminococcus albus (strain ATCC 27210 / DSM 20455 / JCM 14654 / NCDO 2250 / 7) protein is ATP synthase gamma chain.